The following is a 302-amino-acid chain: Methionyl-tRNA formyltransferase (302 aa).

A (6S)-5,6,7,8-tetrahydrofolate-binding site is contributed by 108-111 (SILP).

Belongs to the Fmt family.

The catalysed reaction is L-methionyl-tRNA(fMet) + (6R)-10-formyltetrahydrofolate = N-formyl-L-methionyl-tRNA(fMet) + (6S)-5,6,7,8-tetrahydrofolate + H(+). Its function is as follows. Attaches a formyl group to the free amino group of methionyl-tRNA(fMet). The formyl group appears to play a dual role in the initiator identity of N-formylmethionyl-tRNA by promoting its recognition by IF2 and preventing the misappropriation of this tRNA by the elongation apparatus. This is Methionyl-tRNA formyltransferase from Sulfurimonas denitrificans (strain ATCC 33889 / DSM 1251) (Thiomicrospira denitrificans (strain ATCC 33889 / DSM 1251)).